A 487-amino-acid chain; its full sequence is UDP-N-acetylmuramate--L-alanine ligase (487 aa).

129–135 (GTHGKTT) serves as a coordination point for ATP.

Belongs to the MurCDEF family.

It is found in the cytoplasm. It carries out the reaction UDP-N-acetyl-alpha-D-muramate + L-alanine + ATP = UDP-N-acetyl-alpha-D-muramoyl-L-alanine + ADP + phosphate + H(+). The protein operates within cell wall biogenesis; peptidoglycan biosynthesis. Cell wall formation. This Aliivibrio fischeri (strain ATCC 700601 / ES114) (Vibrio fischeri) protein is UDP-N-acetylmuramate--L-alanine ligase.